Consider the following 200-residue polypeptide: Large ribosomal subunit protein uL4 (200 aa).

A disordered region spans residues 38-75; sequence GRQGSKQQKNRSDVSGGGKRPWRQKGTGRARAGTSRGP.

Belongs to the universal ribosomal protein uL4 family. As to quaternary structure, part of the 50S ribosomal subunit.

In terms of biological role, one of the primary rRNA binding proteins, this protein initially binds near the 5'-end of the 23S rRNA. It is important during the early stages of 50S assembly. It makes multiple contacts with different domains of the 23S rRNA in the assembled 50S subunit and ribosome. Forms part of the polypeptide exit tunnel. The sequence is that of Large ribosomal subunit protein uL4 from Azotobacter vinelandii (strain DJ / ATCC BAA-1303).